Consider the following 868-residue polypeptide: DNA mismatch repair protein MutS (868 aa).

620-627 (GPNMGGKS) serves as a coordination point for ATP.

The protein belongs to the DNA mismatch repair MutS family.

In terms of biological role, this protein is involved in the repair of mismatches in DNA. It is possible that it carries out the mismatch recognition step. This protein has a weak ATPase activity. The sequence is that of DNA mismatch repair protein MutS from Xylella fastidiosa (strain Temecula1 / ATCC 700964).